Here is a 298-residue protein sequence, read N- to C-terminus: Glyoxalase domain-containing protein 4 (298 aa).

The VOC 1 domain maps to 5-130 (RALHFVFKVK…GGYKFYLQDR (126 aa)). At Lys-109 the chain carries N6-succinyllysine. Phosphoserine is present on Ser-131. Positions 137-258 (PVLKVTLAVS…DGHEICFVGD (122 aa)) constitute a VOC 2 domain. Position 273 is an N6-succinyllysine (Lys-273).

It belongs to the glyoxalase I family. As to quaternary structure, interacts with NUDT9.

It localises to the mitochondrion. The sequence is that of Glyoxalase domain-containing protein 4 (Glod4) from Mus musculus (Mouse).